The following is a 413-amino-acid chain: Pyruvate dehydrogenase complex subunit homolog DDB_G0271564, mitochondrial (413 aa).

Residues 1–19 constitute a mitochondrion transit peptide; the sequence is MNRILKQVSNTKGKGIRFY. A Peripheral subunit-binding (PSBD) domain is found at 29–67; it reads YMFPSVRRLLVEYGINSSKEVTATGPQNRLLKGDVLAYI.

Belongs to the 2-oxoacid dehydrogenase family.

The protein localises to the mitochondrion. Functionally, the pyruvate dehydrogenase complex catalyzes the overall conversion of pyruvate to acetyl-CoA and CO(2). It contains multiple copies of three enzymatic components: pyruvate dehydrogenase (E1), dihydrolipoamide acetyltransferase (E2) and lipoamide dehydrogenase (E3). The polypeptide is Pyruvate dehydrogenase complex subunit homolog DDB_G0271564, mitochondrial (pdhX) (Dictyostelium discoideum (Social amoeba)).